The following is a 150-amino-acid chain: Arginine repressor (150 aa).

It belongs to the ArgR family.

Its subcellular location is the cytoplasm. Its pathway is amino-acid biosynthesis; L-arginine biosynthesis [regulation]. Its function is as follows. Regulates arginine biosynthesis genes. The chain is Arginine repressor from Staphylococcus aureus (strain Mu3 / ATCC 700698).